Consider the following 309-residue polypeptide: UDP-URONIC ACID TRANSPORTER 1 (309 aa).

10 helical membrane passes run 9–29 (TLFISTLIISWYSSNIGVLLL), 43–63 (IFLTMCHMSACAILSYISIVF), 78–98 (FLKVATLSIVFCASVVGGNIS), 104–124 (VSFNQAVGATTPFFTALFAYL), 131–151 (AWVTYGALVPVVAGVVIASGG), 152–172 (EPGFHWFGFIMCISATAARAF), 193–213 (LMLYMSPIAVIALLPVTLFME), 231–251 (WILLLVNSVMAYSANLLNFLV), 256–278 (SALTLQVLGNAKGAVAVVISILI), and 283–302 (VTVMGIGGYSITVLGVVAYG).

The protein belongs to the TPT transporter family. TPT (TC 2.A.7.9) subfamily. In terms of tissue distribution, ubiquitous.

The protein resides in the golgi apparatus membrane. UDP-glucuronic acid transporter that modulates the polysaccharide composition of seed mucilage. Transports UDP-glucuronic acid (UDP-GlcA) and UDP-galacturonic acid (UDP-GalA) in vitro. The sequence is that of UDP-URONIC ACID TRANSPORTER 1 from Arabidopsis thaliana (Mouse-ear cress).